The primary structure comprises 358 residues: Peptide chain release factor 1 (358 aa).

At Q233 the chain carries N5-methylglutamine.

The protein belongs to the prokaryotic/mitochondrial release factor family. Methylated by PrmC. Methylation increases the termination efficiency of RF1.

The protein localises to the cytoplasm. Functionally, peptide chain release factor 1 directs the termination of translation in response to the peptide chain termination codons UAG and UAA. The polypeptide is Peptide chain release factor 1 (Staphylococcus haemolyticus (strain JCSC1435)).